Here is a 688-residue protein sequence, read N- to C-terminus: UvrABC system protein B (688 aa).

Positions 41–429 (ANFEAGLAKQ…AGEVTELVVR (389 aa)) constitute a Helicase ATP-binding domain. ATP is bound at residue 54-61 (GVTGSGKT). A Beta-hairpin motif is present at residues 107 to 130 (YYDYYQPEAYVPSSDTFIEKDSSI). Positions 446-612 (QVDDLMSEIH…SVERPISDIM (167 aa)) constitute a Helicase C-terminal domain. Residues 616 to 646 (REDAAEKKSGKGRSKSRQVAEETPDYRAMKP) form a disordered region. Residues 633–645 (QVAEETPDYRAMK) show a composition bias toward basic and acidic residues. Residues 650 to 685 (AGKLKSLEQKMYQHAKDLEFEAAAQIRDQIQKLKTA) enclose the UVR domain.

This sequence belongs to the UvrB family. As to quaternary structure, forms a heterotetramer with UvrA during the search for lesions. Interacts with UvrC in an incision complex.

The protein localises to the cytoplasm. Functionally, the UvrABC repair system catalyzes the recognition and processing of DNA lesions. A damage recognition complex composed of 2 UvrA and 2 UvrB subunits scans DNA for abnormalities. Upon binding of the UvrA(2)B(2) complex to a putative damaged site, the DNA wraps around one UvrB monomer. DNA wrap is dependent on ATP binding by UvrB and probably causes local melting of the DNA helix, facilitating insertion of UvrB beta-hairpin between the DNA strands. Then UvrB probes one DNA strand for the presence of a lesion. If a lesion is found the UvrA subunits dissociate and the UvrB-DNA preincision complex is formed. This complex is subsequently bound by UvrC and the second UvrB is released. If no lesion is found, the DNA wraps around the other UvrB subunit that will check the other stand for damage. The chain is UvrABC system protein B from Xanthomonas oryzae pv. oryzae (strain KACC10331 / KXO85).